A 156-amino-acid polypeptide reads, in one-letter code: SsrA-binding protein (156 aa).

It belongs to the SmpB family.

Its subcellular location is the cytoplasm. Required for rescue of stalled ribosomes mediated by trans-translation. Binds to transfer-messenger RNA (tmRNA), required for stable association of tmRNA with ribosomes. tmRNA and SmpB together mimic tRNA shape, replacing the anticodon stem-loop with SmpB. tmRNA is encoded by the ssrA gene; the 2 termini fold to resemble tRNA(Ala) and it encodes a 'tag peptide', a short internal open reading frame. During trans-translation Ala-aminoacylated tmRNA acts like a tRNA, entering the A-site of stalled ribosomes, displacing the stalled mRNA. The ribosome then switches to translate the ORF on the tmRNA; the nascent peptide is terminated with the 'tag peptide' encoded by the tmRNA and targeted for degradation. The ribosome is freed to recommence translation, which seems to be the essential function of trans-translation. Required for trans-translation. Probably required for sporulation; deletion of the gene for tmRNA impairs sporulation via its effect on trans-translation, and as smpB is required for trans-translation under non-stress conditions, it is also probably required during sporulation. The chain is SsrA-binding protein from Bacillus subtilis (strain 168).